We begin with the raw amino-acid sequence, 735 residues long: Translation factor GUF1 homolog, chloroplastic (735 aa).

Disordered stretches follow at residues 1–38 (MAVP…PSTS) and 106–126 (PENA…GVDN). The transit peptide at 1-47 (MAVPTIPSPACISQSANGSIISTRRSTETNPRQHPSTSYRCAGRVVR) directs the protein to the chloroplast. A compositionally biased stretch (polar residues) spans 11–38 (CISQSANGSIISTRRSTETNPRQHPSTS). Basic and acidic residues predominate over residues 106-115 (PENAEKDYSK). Residues 137 to 319 (SNIRNFSIIA…AVVKKIPPPK (183 aa)) form the tr-type G domain. Residues 146–153 (AHIDHGKS), 212–216 (DTPGH), and 266–269 (NKID) each bind GTP.

The protein belongs to the TRAFAC class translation factor GTPase superfamily. Classic translation factor GTPase family. LepA subfamily.

The protein resides in the plastid. It is found in the chloroplast. The enzyme catalyses GTP + H2O = GDP + phosphate + H(+). Promotes chloroplast protein synthesis. May act as a fidelity factor of the translation reaction, by catalyzing a one-codon backward translocation of tRNAs on improperly translocated ribosomes. This is Translation factor GUF1 homolog, chloroplastic from Physcomitrium patens (Spreading-leaved earth moss).